Consider the following 245-residue polypeptide: 1-(5-phosphoribosyl)-5-[(5-phosphoribosylamino)methylideneamino] imidazole-4-carboxamide isomerase (245 aa).

The active-site Proton acceptor is the D7. D129 functions as the Proton donor in the catalytic mechanism.

This sequence belongs to the HisA/HisF family.

It is found in the cytoplasm. It carries out the reaction 1-(5-phospho-beta-D-ribosyl)-5-[(5-phospho-beta-D-ribosylamino)methylideneamino]imidazole-4-carboxamide = 5-[(5-phospho-1-deoxy-D-ribulos-1-ylimino)methylamino]-1-(5-phospho-beta-D-ribosyl)imidazole-4-carboxamide. It participates in amino-acid biosynthesis; L-histidine biosynthesis; L-histidine from 5-phospho-alpha-D-ribose 1-diphosphate: step 4/9. This is 1-(5-phosphoribosyl)-5-[(5-phosphoribosylamino)methylideneamino] imidazole-4-carboxamide isomerase from Shewanella frigidimarina (strain NCIMB 400).